The following is a 342-amino-acid chain: Peroxisomal membrane protein import receptor PEX19 (342 aa).

Positions methionine 1–glutamate 18 are enriched in acidic residues. Disordered stretches follow at residues methionine 1–leucine 68 and cysteine 119–asparagine 141. A compositionally biased stretch (basic and acidic residues) spans serine 41 to aspartate 54. Serine 62 bears the Phosphoserine mark. A Phosphoserine modification is found at serine 304. Residues isoleucine 321–glutamine 342 form a disordered region. Over residues leucine 331–glutamine 342 the composition is skewed to basic and acidic residues. Cysteine 339 is subject to Cysteine methyl ester. The S-farnesyl cysteine moiety is linked to residue cysteine 339. A propeptide spans lysine 340–glutamine 342 (removed in mature form).

It belongs to the peroxin-19 family. Interacts (farnesylated) with PEX3; farnesylation is required for this interaction. Interacts with PEX2, PEX5, PEX10, PEX11, PEX12, PEX13, PEX14, PEX17, PEX22, PEX25, PEX30 and PEX32; the interaction requires well-defined PEX19-binding sites within the peroxisomal membrane protein targeting signal (mPTS) of the PMPs and is independent on the presence of PEX3. Interacts with VPS1.

The protein resides in the cytoplasm. It localises to the peroxisome membrane. Its subcellular location is the endoplasmic reticulum membrane. Its function is as follows. Required for proper post-translational import and stabilization of peroxisomal membrane proteins (PMPs). Acts as a cytosolic import receptor for PMPs and delivers them to the docking factor PEX3 at the peroxisomal membrane for subsequent insertion into the membrane. Acts as a chaperone in stabilizing or maintaining PMPs in the lipid bilayer. Directs PEX17, a peripheral component of the peroxisomal matrix protein translocation machinery, to peroxisomes. Stabilizes VPS1, a protein required for peroxisomal fission, at the peroxisomal membrane. Also acts in conjunction with PEX3 in the formation of peroxisomes from preperoxisomal compartments at the endoplasmic reticulum during de novo peroxisome synthesis, probably via the import of additional PMPs. This Saccharomyces cerevisiae (strain ATCC 204508 / S288c) (Baker's yeast) protein is Peroxisomal membrane protein import receptor PEX19 (PEX19).